A 134-amino-acid chain; its full sequence is Histone H3-like centromeric protein A (134 aa).

Residues 1–14 (MGPRRKPQTPRRRP) are compositionally biased toward basic residues. A disordered region spans residues 1 to 34 (MGPRRKPQTPRRRPSSPAPGPSRQSSSVGSQTLR). Glycine 2 is modified (n,N,N-trimethylglycine). A phosphoserine mark is found at serine 16 and serine 22. An important for flexibility of DNA ends that protrude from nucleosomes region spans residues 34-48 (RRRQKFMWLKEIKTL). Residues 35–134 (RRQKFMWLKE…RIRGFEGGLP (100 aa)) form an H3-like region. Position 62 is a phosphoserine (serine 62). The interval 69-110 (CEKFSRGVDFWWQAQALLALQEAAEAFLIHLFEDAYLLSLHA) is CATD.

The protein belongs to the histone H3 family. As to quaternary structure, component of centromeric nucleosomes, where DNA is wrapped around a histone octamer core. The octamer contains two molecules each of H2A, H2B, CENPA and H4 assembled in one CENPA-H4 heterotetramer and two H2A-H2B heterodimers. CENPA modulates the DNA-binding characteristics of nucleosomes so that protruding DNA ends have higher flexibility than in nucleosomes containing conventional histone H3. Inhibits binding of histone H1 to nucleosomes, since histone H1 binds preferentially to rigid DNA linkers that protrude from nucleosomes. Nucleosomes containing CENPA also contain histone H2A variants such as MACROH2A and H2A.Z/H2AZ1. The CENPA-H4 heterotetramer is more compact and structurally more rigid than corresponding H3-H4 heterotetramers. Can assemble into nucleosomes that contain both CENPA and histone H3.3; these nucleosomes interact with a single CENPC chain. Heterotrimer composed of HJURP, CENPA and histone H4, where HJURP interacts with the dimer formed by CENPA and histone H4 and prevents tetramerization of CENPA and H4. Component of the CENPA-NAC complex, at least composed of CENPA, CENPC, CENPH, CENPM, CENPN, CENPT and CENPU. Interacts (via CATD domain) with HJURP; the interaction is direct and is required for its localization to centromeres. Interacts with CENPC, CENPN and CENPT; interaction is direct. Part of a centromere complex consisting of CENPA, CENPT and CENPW. Identified in centromere complexes containing histones H2A, H2B and H4, and at least CENPA, CENPB, CENPC, CENPT, CENPN, HJURP, SUPT16H, SSRP1 and RSF1. Can self-associate. The CENPA-H4 heterotetramer can bind DNA by itself (in vitro). Interacts with CDK1, PPP1CA and RBBP7. In terms of processing, poly-ADP-ribosylated by PARP1. Post-translationally, trimethylated by NTMT1 at the N-terminal glycine after cleavage of Met-1. Methylation is low before incorporation into nucleosomes and increases with cell cycle progression, with the highest levels in mitotic nucleosomes. Phosphorylated by CDK1 at Ser-62 during early mitosis; this abolishes association with chromatin and centromeres, prevents interaction with HJURP and thereby prevents premature assembly of CENPA into centromeres. Dephosphorylated at Ser-62 by PPP1CA during late mitosis.

It localises to the nucleus. The protein resides in the chromosome. It is found in the centromere. Functionally, histone H3-like nucleosomal protein that is specifically found in centromeric nucleosomes. Replaces conventional H3 in the nucleosome core of centromeric chromatin that serves as an assembly site for the inner kinetochore. The presence of CENPA subtly modifies the nucleosome structure and the way DNA is wrapped around the nucleosome and gives rise to protruding DNA ends that are less well-ordered and rigid compared to nucleosomes containing histone H3. May serve as an epigenetic mark that propagates centromere identity through replication and cell division. Required for recruitment and assembly of kinetochore proteins, and as a consequence required for progress through mitosis, chromosome segregation and cytokinesis. The polypeptide is Histone H3-like centromeric protein A (Cenpa) (Mus musculus (Mouse)).